A 247-amino-acid chain; its full sequence is OCIA domain-containing protein 1 (247 aa).

Residues 1–112 (MNGRADFREP…KKLENSPLGE (112 aa)) form the OCIA domain. 3 positions are modified to phosphoserine: Ser108, Ser116, and Ser123. 2 disordered regions span residues 113–153 (ALRS…ADNI) and 167–230 (SASM…MQER). 2 stretches are compositionally biased toward polar residues: residues 136-146 (SNVSGQSSFGT) and 168-177 (ASMNESTPTG). Basic and acidic residues-rich tracts occupy residues 192–210 (ESPKRKGVTYEELRSKNRE) and 218–230 (HKTDPSVRPMQER). Residue Ser193 is modified to Phosphoserine.

Belongs to the OCIAD1 family. In terms of assembly, interacts with OCIAD2. Interacts with STAT3. As to expression, expressed at high levels in the brain and at lower levels in the heart, ovary, testis and kidney. Expression is strongest in embryonic stem cells and in the blood vessels.

Its subcellular location is the endosome. Maintains stem cell potency. Increases STAT3 phosphorylation and controls ERK phosphorylation. May act as a scaffold, increasing STAT3 recruitment onto endosomes. This Mus musculus (Mouse) protein is OCIA domain-containing protein 1.